The sequence spans 359 residues: MTAWRTLATQVLNGTPLSSSQALDVVHADDDEVLALLDAAFRVRRHHHGRRVRIHVLQNAKSGVCPEDCAFCSQSLKFDSDPEQYGMQQVDQIVEGAKAAWDKGAVTYCIVTATRGPHSSEVDVVCEATRRIKETYPMDVCASLGLLDAKQARKLADAGVDRYNHNLETSCDHFGNVVTTHEWSDRVETVKQAKAAGMEACCGGIIGLGEARADWVDLALALREIGVESVPVNFLNPRSGTPLEDVDTVRPQDCLKALAMFRLVHPEADLRMAGGREVVLDQMQPLALYAANSFFTDGYLTTGGQGESKDYRMIQQAGFEPVIVEDGPERQTPATADDTPSGDPEAADRRRQPSAGPAG.

Positions 47–276 (HHGRRVRIHV…EADLRMAGGR (230 aa)) constitute a Radical SAM core domain. [4Fe-4S] cluster-binding residues include C65, C69, and C72. Residues C109, C141, C201, and R271 each coordinate [2Fe-2S] cluster. The disordered stretch occupies residues 320–359 (EPVIVEDGPERQTPATADDTPSGDPEAADRRRQPSAGPAG).

This sequence belongs to the radical SAM superfamily. Biotin synthase family. As to quaternary structure, homodimer. It depends on [4Fe-4S] cluster as a cofactor. [2Fe-2S] cluster serves as cofactor.

It carries out the reaction (4R,5S)-dethiobiotin + (sulfur carrier)-SH + 2 reduced [2Fe-2S]-[ferredoxin] + 2 S-adenosyl-L-methionine = (sulfur carrier)-H + biotin + 2 5'-deoxyadenosine + 2 L-methionine + 2 oxidized [2Fe-2S]-[ferredoxin]. Its pathway is cofactor biosynthesis; biotin biosynthesis; biotin from 7,8-diaminononanoate: step 2/2. Functionally, catalyzes the conversion of dethiobiotin (DTB) to biotin by the insertion of a sulfur atom into dethiobiotin via a radical-based mechanism. The sequence is that of Biotin synthase from Salinibacter ruber (strain DSM 13855 / M31).